Reading from the N-terminus, the 419-residue chain is L-rhamnose isomerase (419 aa).

Residues His262, Asp294, and Asp296 each coordinate Mn(2+).

It belongs to the rhamnose isomerase family. In terms of assembly, homotetramer. Mn(2+) serves as cofactor.

Its subcellular location is the cytoplasm. It carries out the reaction L-rhamnopyranose = L-rhamnulose. The protein operates within carbohydrate degradation; L-rhamnose degradation; glycerone phosphate from L-rhamnose: step 1/3. Its function is as follows. Catalyzes the interconversion of L-rhamnose and L-rhamnulose. In Salmonella typhimurium (strain LT2 / SGSC1412 / ATCC 700720), this protein is L-rhamnose isomerase.